The chain runs to 2179 residues: MGQTVSKEEIKEEIEKQLNICFLSLDQEDIHSKNSISFNLSTVSAHKGSIDFIFNKTSNNNSSLIGSNGFVNISNNNIIDDLIKDKSTSILLQYANKHNDHDLNKNKNNNNNSEENNNNSGEGDEDNTGEKAPPPAPSSPLSPSSSSSTSTTTTPLSTSISLNDLNSMPRKRTTIKYKQGSFEASSYDGDEISIQVVKKNWINNSNDNNSQQRPRLYERSLKTSQQQQQQQQQQFKFQPNETLSLWEYFDEINSPPMLYNIDQNNLNFTNNYIVQEKLNSLDNKDDDDNNNNNNNSNSQSFTFNKEFIKSVLQSFSTYISSLPNSIHFTDTNIPPSIDYTSPNVLKLHPNLLPIIEIIYNDIDNNDNDNDDDDDKNNNNLNDKIFIIYKKYNYTLDGLLRYSLQYLQRNQKITTFMIYQLIQLFSFLHQREIVHGDLQPSNIHLNNQMWLGLEGFSFPSTPLYHQPLENQFESSMNKWINGELSNFNYLMILNHLAHRHIGDPMNHPVLPWVIDFTTSPINIDNDNDSRDDVDNSSSSNNNNNNNNEDQSGKTVGWRDLTKTKYRLNKGDEQLDFQFFNTGNSTTLGDDSMGGGIGSIGSTGGITNSSNNGGGGGSGNSGKAHHISDILSELTYYSYLARRTSVPLLRRFVRTNYEPNEYPATMERLYRWTPDECIPEFFTDSTIFKSIHSDMPDLQLPDWVPNQSTQEFIKIHMNALESDHVSKQLHSWIDLTFGYLLSGEEAIKAKNLALMDTTIPRNNGIVQLFNHPHPKKKYLKSLKYQRQQQTQQHQQQTQQQPQFDTEFTIKFNESSFRYENQNINHNSTFLPNTTINSILNNLSNVNNHHHHHSHNSNIPNTVSSRSDSFGSNSSSSAPGNSNSNILLSPSMSSSMGSLNSATSPSSQSQSSHQQTSSTPTSQTQRSFSIINNNNSSSSSNSGVNNKPRTSSGKKEGENKPSLAKFLPSLFTQAIKIEKEDNSIVSSSPTNTPVQIDLLSSVNSNYIGYGSSIGNSSMQHQLYLQQQLQQQQQQQAQQQQSQQQSQQQQANSPNSKQLHLIHSKSEESMIKKYSNGLFSSMGISKSTTNAPTTNNTTTNSNMGDSIGNNITSPPSPTSLKDSSSIQQQQQQQQQQQQNSESTRPITPPNVSNSTTDLSSIYTNQEHIIEPLPAELELELYEYELLNKDVTGINANIIYSSSPTNVSTTTNTTTSTTQPYIIYNNNTTQNNVASYHSQQKKPNVFIESLLNCELNNEFGHNFENLLPIYRPLEFNDNNSGSSELSIDNEKNKGLIKIFSNNKEQSNLEILKSNDMFALGCIIAELYQGYPLFTSKGLENHFLNHSNSSNNNNNNNNNNNNNNKNGSFMITSNLPNNVKEIVDKLIQPNPMERSEVNELLSSSLFPNYFKQMYHFLVHYHSLNTPEERLTFTLANIGIVTSLPNESIDLILPFILELFYDSKTMVSALIDLLDPLSQRLGIHLSTSYLLPCLIALYQRHDDHLLQCHLIQIPMIDMIVSRFGRDVYIHHILPFLLDSVKTNPKDNPNHEMLTTALIKISKVLGIPLTIRHMMYPLLVALTKPRLQHLNEPLVAIASSLGENVIVKFYFPSIFILIQKHSSKASRSESIPCTLLSLLQELILLVKPGLVLRSLLKESTQLASLLLNPSNTSLLLPLAETLLRISGRIGVNHTKNYILKYVQQFFSNYSDLYDYSGDNSYAKIGGDSETTKQLRSIYSPEMTYYLYYKLARIIGFEVMRAEISDNSLIEHIMRIYIKENNIKTTNSTITTTTTTTTTTTTTTTTNNNNENPNSLNFIPPYVSDDGLYDIIEETLDQKISSTYLLDDYQDYDDLICDKTFTLQGNIVAQYKEHNASIKSLAVSPSEERFISGSKDNLVKIWSLDSTKSLTTYNQHMHTAHTVHFVSSLVASCDITSIQVWDPESKIKVNVFYEPTGSFSCFEPISSKYLIASTCESTLSFYDLSMGSLTHEWSLAYQTGQAIRCIATSNDHLIGSNSNQFSSSSFIASATPTWVATGSSSGMITLLDTRTGTILEQWKSHHDSPVNKLIAQGSRYLISCGDKSVIQWDLHQSPPIISKMWKGFKDNITNASLYQNDLIVSSGHKLSSMTLLDDPYQLTSGGGNQNTFRVDGLKLNTPKQSNILSLSFFPLHHVLLAGTDDGFIKICQ.

Residues 100–167 form a disordered region; the sequence is DHDLNKNKNN…TSISLNDLNS (68 aa). Composition is skewed to low complexity over residues 106-121 and 141-159; these read NKNN…NNSG and LSPS…LSTS. The WD 1 repeat unit spans residues 216–256; it reads LYERSLKTSQQQQQQQQQQFKFQPNETLSLWEYFDEINSPP. Disordered stretches follow at residues 281–300, 523–556, 589–621, 778–801, 844–959, 1033–1055, 1079–1153, 1339–1362, and 1785–1807; these read LDNK…NSQS, DNDN…TVGW, DSMG…NSGK, KSLK…QPQF, NNHH…NKPS, AQQQ…SKQL, GISK…STTD, NHSN…KNGS, and TTTT…PNSL. The BEACH domain occupies 463–801; that stretch reads YHQPLENQFE…QQQTQQQPQF (339 aa). Positions 534 to 548 are enriched in low complexity; it reads NSSSSNNNNNNNNED. The segment covering 590–602 has biased composition (gly residues); the sequence is SMGGGIGSIGSTG. Low complexity-rich tracts occupy residues 783–800, 853–943, 1033–1047, and 1084–1098; these read QRQQ…QQPQ, NSNI…GVNN, AQQQ…QQQA, and TTNA…TNSN. Residues 1021 to 1049 adopt a coiled-coil conformation; the sequence is LQQQLQQQQQQQAQQQQSQQQSQQQQANS. The 337-residue stretch at 1064–1400 folds into the Protein kinase domain; the sequence is ESMIKKYSNG…VNELLSSSLF (337 aa). Positions 1099–1122 are enriched in polar residues; the sequence is MGDSIGNNITSPPSPTSLKDSSSI. Over residues 1123-1134 the composition is skewed to low complexity; the sequence is QQQQQQQQQQQQ. Residues 1135–1153 are compositionally biased toward polar residues; sequence NSESTRPITPPNVSNSTTD. Composition is skewed to low complexity over residues 1339 to 1360 and 1785 to 1801; these read NHSN…NNKN and TTTT…NNNN. 6 WD repeats span residues 1864-1903, 1906-1942, 1945-1983, 2007-2048, 2052-2089, and 2149-2179; these read EHNA…SLTT, QHMH…KVNV, EPTG…LTHE, SNSN…ILEQ, HHDS…PIIS, and PKQS…KICQ.

It belongs to the protein kinase superfamily. Ser/Thr protein kinase family.

In Dictyostelium discoideum (Social amoeba), this protein is Probable inactive serine/threonine-protein kinase lvsG (lvsG).